Reading from the N-terminus, the 449-residue chain is Elongation factor 1-alpha 1 (449 aa).

In terms of domain architecture, tr-type G spans 5-230 (KFHINIVVIG…DQINEPKRPS (226 aa)). The segment at 14 to 21 (GHVDSGKS) is G1. Position 14–21 (14–21 (GHVDSGKS)) interacts with GTP. The residue at position 55 (lysine 55) is an N6,N6-dimethyllysine. Residues 70–74 (GITID) are G2. At lysine 79 the chain carries N6,N6,N6-trimethyllysine. The G3 stretch occupies residues 91–94 (DAPG). Residues 91–95 (DAPGH) and 153–156 (NKMD) each bind GTP. The interval 153–156 (NKMD) is G4. Lysine 187 carries the post-translational modification N6,N6,N6-trimethyllysine. The G5 stretch occupies residues 194–196 (SGF). Lysine 261 bears the N6-methyllysine mark. Residues lysine 306 and lysine 396 each carry the N6,N6,N6-trimethyllysine modification. Glycyl lysine isopeptide (Lys-Gly) (interchain with G-Cter in ubiquitin) cross-links involve residues lysine 438 and lysine 441.

This sequence belongs to the TRAFAC class translation factor GTPase superfamily. Classic translation factor GTPase family. EF-Tu/EF-1A subfamily.

It is found in the cytoplasm. In terms of biological role, this protein promotes the GTP-dependent binding of aminoacyl-tRNA to the A-site of ribosomes during protein biosynthesis. The sequence is that of Elongation factor 1-alpha 1 (A1) from Arabidopsis thaliana (Mouse-ear cress).